We begin with the raw amino-acid sequence, 309 residues long: Ribonuclease Z (309 aa).

His63, His65, Asp67, His68, His143, Asp213, and His271 together coordinate Zn(2+). The active-site Proton acceptor is the Asp67.

It belongs to the RNase Z family. In terms of assembly, homodimer. Zn(2+) is required as a cofactor.

It carries out the reaction Endonucleolytic cleavage of RNA, removing extra 3' nucleotides from tRNA precursor, generating 3' termini of tRNAs. A 3'-hydroxy group is left at the tRNA terminus and a 5'-phosphoryl group is left at the trailer molecule.. Its function is as follows. Zinc phosphodiesterase, which displays some tRNA 3'-processing endonuclease activity. Probably involved in tRNA maturation, by removing a 3'-trailer from precursor tRNA. This chain is Ribonuclease Z, found in Phocaeicola vulgatus (strain ATCC 8482 / DSM 1447 / JCM 5826 / CCUG 4940 / NBRC 14291 / NCTC 11154) (Bacteroides vulgatus).